A 153-amino-acid polypeptide reads, in one-letter code: UPF0260 protein YcgN (153 aa).

This sequence belongs to the UPF0260 family.

This chain is UPF0260 protein YcgN, found in Escherichia coli O6:K15:H31 (strain 536 / UPEC).